The chain runs to 553 residues: Dihydroxy-acid dehydratase (553 aa).

Residue Asp-78 participates in Mg(2+) binding. Cys-119 serves as a coordination point for [2Fe-2S] cluster. Mg(2+)-binding residues include Asp-120 and Lys-121. Lys-121 is subject to N6-carboxylysine. Cys-191 is a binding site for [2Fe-2S] cluster. Glu-444 serves as a coordination point for Mg(2+). Ser-470 functions as the Proton acceptor in the catalytic mechanism.

It belongs to the IlvD/Edd family. In terms of assembly, homodimer. Requires [2Fe-2S] cluster as cofactor. Mg(2+) is required as a cofactor.

The catalysed reaction is (2R)-2,3-dihydroxy-3-methylbutanoate = 3-methyl-2-oxobutanoate + H2O. It catalyses the reaction (2R,3R)-2,3-dihydroxy-3-methylpentanoate = (S)-3-methyl-2-oxopentanoate + H2O. It participates in amino-acid biosynthesis; L-isoleucine biosynthesis; L-isoleucine from 2-oxobutanoate: step 3/4. Its pathway is amino-acid biosynthesis; L-valine biosynthesis; L-valine from pyruvate: step 3/4. Functions in the biosynthesis of branched-chain amino acids. Catalyzes the dehydration of (2R,3R)-2,3-dihydroxy-3-methylpentanoate (2,3-dihydroxy-3-methylvalerate) into 2-oxo-3-methylpentanoate (2-oxo-3-methylvalerate) and of (2R)-2,3-dihydroxy-3-methylbutanoate (2,3-dihydroxyisovalerate) into 2-oxo-3-methylbutanoate (2-oxoisovalerate), the penultimate precursor to L-isoleucine and L-valine, respectively. This chain is Dihydroxy-acid dehydratase, found in Methanococcoides burtonii (strain DSM 6242 / NBRC 107633 / OCM 468 / ACE-M).